A 148-amino-acid polypeptide reads, in one-letter code: Ubiquitin-conjugating enzyme E2 13 (148 aa).

A UBC core domain is found at 2–148; that stretch reads ALPKRIIKEI…AREWTKKYAV (147 aa). The active-site Glycyl thioester intermediate is Cys86.

Belongs to the ubiquitin-conjugating enzyme family. In terms of assembly, heterodimer with spm2.

It catalyses the reaction S-ubiquitinyl-[E1 ubiquitin-activating enzyme]-L-cysteine + [E2 ubiquitin-conjugating enzyme]-L-cysteine = [E1 ubiquitin-activating enzyme]-L-cysteine + S-ubiquitinyl-[E2 ubiquitin-conjugating enzyme]-L-cysteine.. It participates in protein modification; protein ubiquitination. Its function is as follows. Has a role in the DNA error-free postreplication repair (PRR) pathway. The ubc13/spm2 heterodimer catalyzes the synthesis of non-canonical poly-ubiquitin chains that are linked through 'Lys-63'. This chain is Ubiquitin-conjugating enzyme E2 13 (ubc13), found in Schizosaccharomyces pombe (strain 972 / ATCC 24843) (Fission yeast).